The sequence spans 147 residues: Small ribosomal subunit protein uS12 (147 aa).

Belongs to the universal ribosomal protein uS12 family. In terms of assembly, part of the 30S ribosomal subunit.

Functionally, with S4 and S5 plays an important role in translational accuracy. Located at the interface of the 30S and 50S subunits. The sequence is that of Small ribosomal subunit protein uS12 from Sulfolobus acidocaldarius (strain ATCC 33909 / DSM 639 / JCM 8929 / NBRC 15157 / NCIMB 11770).